A 208-amino-acid chain; its full sequence is Small ribosomal subunit protein uS4 (208 aa).

An S4 RNA-binding domain is found at 97–158; that stretch reads TRLDNVIYRM…RAQKYLCVQE (62 aa).

The protein belongs to the universal ribosomal protein uS4 family. Part of the 30S ribosomal subunit. Contacts protein S5. The interaction surface between S4 and S5 is involved in control of translational fidelity.

One of the primary rRNA binding proteins, it binds directly to 16S rRNA where it nucleates assembly of the body of the 30S subunit. Its function is as follows. With S5 and S12 plays an important role in translational accuracy. The polypeptide is Small ribosomal subunit protein uS4 (Xylella fastidiosa (strain M23)).